The sequence spans 348 residues: Dihydroorotase (348 aa).

His-17 and His-19 together coordinate Zn(2+). Substrate-binding positions include 19 to 21 (HLR) and Asn-45. The Zn(2+) site is built by Lys-103, His-140, and His-178. At Lys-103 the chain carries N6-carboxylysine. Substrate is bound at residue His-140. Position 223 (Leu-223) interacts with substrate. Position 251 (Asp-251) interacts with Zn(2+). Asp-251 is an active-site residue. Residues His-255 and Ala-267 each coordinate substrate.

It belongs to the metallo-dependent hydrolases superfamily. DHOase family. Class II DHOase subfamily. In terms of assembly, homodimer. Zn(2+) is required as a cofactor.

The catalysed reaction is (S)-dihydroorotate + H2O = N-carbamoyl-L-aspartate + H(+). Its pathway is pyrimidine metabolism; UMP biosynthesis via de novo pathway; (S)-dihydroorotate from bicarbonate: step 3/3. Functionally, catalyzes the reversible cyclization of carbamoyl aspartate to dihydroorotate. This Escherichia coli O139:H28 (strain E24377A / ETEC) protein is Dihydroorotase.